Reading from the N-terminus, the 338-residue chain is MLVLINTIQEQASEAIKQATDIVALEQIRVDFLGKKGKLTELLKGLANLSAEEKPKVGQLVNQAKQGISALIETKMIELKEKQLLAKLAAEQIDVTLPGRNHSTGSLHPVTQVKHRINDYFSRLGFDIVEGPEIETEFYNFEALNIPGHHPARAMHDTFYFGDGRLLRTHTSPVQIRTMEQRKPPFRLIAPGRVYRCDSDVTHTPMFHQVEGLLIDKQATLAGLKGLLQDFFSYFFGRELALRFRPSYFPFTEPSAEVDIECTQCNGKGCRSCKFTGWLEVLGCGMVHPNVLIAVNIDPNEYHGWAFGMGMDRLAMLYYGIDDLRMLFENDLTFLRQF.

Position 253 (Glu-253) interacts with Mg(2+).

It belongs to the class-II aminoacyl-tRNA synthetase family. Phe-tRNA synthetase alpha subunit type 1 subfamily. In terms of assembly, tetramer of two alpha and two beta subunits. Requires Mg(2+) as cofactor.

The protein resides in the cytoplasm. It carries out the reaction tRNA(Phe) + L-phenylalanine + ATP = L-phenylalanyl-tRNA(Phe) + AMP + diphosphate + H(+). In Legionella pneumophila (strain Lens), this protein is Phenylalanine--tRNA ligase alpha subunit.